Consider the following 348-residue polypeptide: Putative transport protein HI_0338 (348 aa).

The next 9 helical transmembrane spans lie at 7–27 (LHRT…VKLA), 28–48 (AEIV…SPII), 60–80 (LAIT…VGLI), 139–159 (VLLN…VVIF), 196–216 (VIGY…GVFI), 223–243 (VQYA…PNIG), 245–265 (IIAA…GIGF), 267–287 (VAIG…PKMM), and 296–316 (LVVF…GMLL).

This sequence belongs to the autoinducer-2 exporter (AI-2E) (TC 2.A.86) family.

Its subcellular location is the cell membrane. This chain is Putative transport protein HI_0338, found in Haemophilus influenzae (strain ATCC 51907 / DSM 11121 / KW20 / Rd).